The primary structure comprises 425 residues: Amidase 1 (425 aa).

Ala-2 carries the post-translational modification N-acetylalanine. Catalysis depends on charge relay system residues Lys-36 and Ser-113. Ser-137 (acyl-ester intermediate) is an active-site residue.

It belongs to the amidase family. As to expression, expressed in cotyledons, leaves and flower buds. Lower levels in roots, stems and siliques.

The protein resides in the cytoplasm. The protein localises to the nucleus. It localises to the nucleoplasm. It catalyses the reaction a monocarboxylic acid amide + H2O = a monocarboxylate + NH4(+). It carries out the reaction indole-3-acetamide + H2O = (indol-3-yl)acetate + NH4(+). The catalysed reaction is 2-phenylacetamide + H2O = 2-phenylacetate + NH4(+). The enzyme catalyses L-asparagine + H2O = L-aspartate + NH4(+). It catalyses the reaction 1-naphthaleneacetamide + H2O = 1-naphthaleneacetate + NH4(+). Its activity is regulated as follows. Inhibited by phenylmethylsulfonyl fluoride (PMSF). Amidase involved in auxin biosynthesis. Converts indole-3-acetamide to indole-3-acetate. Converts phenyl-2-acetamide (PAM) to phenyl-2-acetate. Substrate preference is PAM &gt; IAM. Can also use L-asparagine and 1-naphtalene-acetamide as substrates, but not indole-3-acetonitrile or indole-3-acetyl-L-aspartic acid. This chain is Amidase 1, found in Arabidopsis thaliana (Mouse-ear cress).